A 181-amino-acid chain; its full sequence is Thioredoxin-like protein CITRX1, chloroplastic (181 aa).

Residues 1–20 are disordered; that stretch reads MQAATLSFHPSAPPPQTSAC. Residues 1 to 70 constitute a chloroplast transit peptide; that stretch reads MQAATLSFHP…PAVATGKYVR (70 aa). In terms of domain architecture, Thioredoxin spans 71–181; sequence EDYLVKKVSA…MMRDIINNDL (111 aa). Catalysis depends on nucleophile residues Cys-104 and Cys-107. A disulfide bond links Cys-104 and Cys-107.

This sequence belongs to the thioredoxin family. Plant CITRX-type subfamily.

It is found in the plastid. The protein resides in the chloroplast. Functionally, probable thiol-disulfide oxidoreductase that may play a role in proper chloroplast development. The protein is Thioredoxin-like protein CITRX1, chloroplastic of Nicotiana benthamiana.